A 94-amino-acid chain; its full sequence is Large ribosomal subunit protein bL25 (94 aa).

Belongs to the bacterial ribosomal protein bL25 family. In terms of assembly, part of the 50S ribosomal subunit; part of the 5S rRNA/L5/L18/L25 subcomplex. Contacts the 5S rRNA. Binds to the 5S rRNA independently of L5 and L18.

Functionally, this is one of the proteins that binds to the 5S RNA in the ribosome where it forms part of the central protuberance. This is Large ribosomal subunit protein bL25 from Sodalis glossinidius (strain morsitans).